A 183-amino-acid chain; its full sequence is Protein jagunal homolog 1 (183 aa).

The Cytoplasmic segment spans residues 1 to 39 (MASRAGPRAAGTDGSDFQHRERVAMHYQMSVTLKYEIKK). A Phosphoserine modification is found at serine 3. The helical transmembrane segment at 40–60 (LIYVHLVIWLLLVAKMSVGHL) threads the bilayer. Over 61–71 (RLLSHDQVAMP) the chain is Lumenal. A helical transmembrane segment spans residues 72–92 (YQWEYPYLLSILPSLLGLLSF). Residues 93–96 (PRNN) lie on the Cytoplasmic side of the membrane. The chain crosses the membrane as a helical span at residues 97 to 117 (ISYLVLSMISMGLFSIAPLIY). The Lumenal segment spans residues 118–137 (GSMEMFPAAQQLYRHGKAYR). Residues 138-158 (FLFGFSAVSIMYLVLVLAVQV) traverse the membrane as a helical segment. Over 159–183 (HAWQLYYSKKLLDSWFTSTQEKKHK) the chain is Cytoplasmic.

It belongs to the jagunal family. In terms of assembly, interacts with COPA, COPB2 and COPG2. As to expression, ubiquitously expressed.

The protein resides in the endoplasmic reticulum membrane. Its function is as follows. Endoplasmic reticulum transmembrane protein involved in vesicle-mediated transport, which is required for neutrophil function. Required for vesicle-mediated transport; it is however unclear whether it is involved in early secretory pathway or intracellular protein transport. Acts as a regulator of neutrophil function, probably via its role in vesicle-mediated transport: required for defense against fungal pathogens and for granulocyte colony-stimulating factor (GM-CSF) signaling pathway; possibly by regulating glycosylation and/or targeting of proteins contributing to the viability and migration of neutrophils. This Homo sapiens (Human) protein is Protein jagunal homolog 1.